A 210-amino-acid chain; its full sequence is 3-phospho-D-glycerate guanylyltransferase (210 aa).

Belongs to the CofC family.

The catalysed reaction is (2R)-3-phosphoglycerate + GTP + H(+) = 3-[(R)-glyceryl]-diphospho-5'-guanosine + diphosphate. The protein operates within cofactor biosynthesis; coenzyme F420 biosynthesis. Its function is as follows. Guanylyltransferase that catalyzes the activation of (2R)-3-phosphoglycerate (3PG) as 3-[(R)-glyceryl]-diphospho-5'-guanosine, via the condensation of 3PG with GTP. It is involved in the biosynthesis of a derivative of the hydride carrier cofactor coenzyme F420, 3PG-F420. This chain is 3-phospho-D-glycerate guanylyltransferase, found in Colwellia psychrerythraea (strain 34H / ATCC BAA-681) (Vibrio psychroerythus).